Here is a 940-residue protein sequence, read N- to C-terminus: UvrABC system protein A (940 aa).

31-38 (GLSGSGKS) provides a ligand contact to ATP. The C4-type zinc-finger motif lies at 252–279 (CPHCGYSMRELEPRLFSFNNPAGACPTC). ABC transporter domains lie at 309–586 (WDQK…PNSL) and 606–936 (KDAK…RFLK). 639–646 (GVSGSGKS) provides a ligand contact to ATP. Residues 739–765 (CEACQGDGVIKVEMHFLPDVYVPCDVC) form a C4-type zinc finger.

It belongs to the ABC transporter superfamily. UvrA family. In terms of assembly, forms a heterotetramer with UvrB during the search for lesions.

The protein resides in the cytoplasm. Its function is as follows. The UvrABC repair system catalyzes the recognition and processing of DNA lesions. UvrA is an ATPase and a DNA-binding protein. A damage recognition complex composed of 2 UvrA and 2 UvrB subunits scans DNA for abnormalities. When the presence of a lesion has been verified by UvrB, the UvrA molecules dissociate. The protein is UvrABC system protein A of Vibrio cholerae serotype O1 (strain ATCC 39315 / El Tor Inaba N16961).